Here is a 472-residue protein sequence, read N- to C-terminus: 3-isopropylmalate dehydratase large subunit (472 aa).

[4Fe-4S] cluster is bound by residues Cys-347, Cys-407, and Cys-410.

It belongs to the aconitase/IPM isomerase family. LeuC type 1 subfamily. In terms of assembly, heterodimer of LeuC and LeuD. It depends on [4Fe-4S] cluster as a cofactor.

It catalyses the reaction (2R,3S)-3-isopropylmalate = (2S)-2-isopropylmalate. The protein operates within amino-acid biosynthesis; L-leucine biosynthesis; L-leucine from 3-methyl-2-oxobutanoate: step 2/4. Functionally, catalyzes the isomerization between 2-isopropylmalate and 3-isopropylmalate, via the formation of 2-isopropylmaleate. This chain is 3-isopropylmalate dehydratase large subunit, found in Synechococcus sp. (strain WH7803).